The following is an 829-amino-acid chain: Sodium/hydrogen exchanger 3 (829 aa).

Residues 1 to 26 (MWHRALGPGWKLLLALALTSLQGARG) form the signal peptide. Residues 27-46 (AEEEPSSDGSFQVVTFKWHH) are Extracellular-facing. A helical membrane pass occupies residues 47 to 69 (VQDPYIIALWILVASLAKIVFHL). The Cytoplasmic portion of the chain corresponds to 70–77 (SHKVTSIV). A helical membrane pass occupies residues 78 to 97 (PESALLIVLGLVLGGIVWAA). Topologically, residues 98–106 (DHIASFTLT) are extracellular. Residues 107 to 124 (PTLFFFYLLPPIVLDAGY) traverse the membrane as a helical segment. The Cytoplasmic portion of the chain corresponds to 125-127 (FMP). A helical membrane pass occupies residues 128 to 163 (NRLFFGNLGTILLYAVIGTIWNAATTGLSLYGVFLS). Gly-133, Gly-136, and Thr-137 together coordinate a 1,2-diacyl-sn-glycero-3-phospho-(1D-myo-inositol). The Extracellular portion of the chain corresponds to 164–176 (GLMGELKIGLLDF). The helical transmembrane segment at 177 to 198 (LLFGSLIAAVDPVAVLAVFEEV) threads the bilayer. Residues 199 to 200 (HV) lie on the Cytoplasmic side of the membrane. The helical transmembrane segment at 201–232 (NEVLFIIVFGESLLNDAVTVVLYNVFESFVTL) threads the bilayer. The Extracellular portion of the chain corresponds to 233–239 (GGDAVTG). A helical transmembrane segment spans residues 240–274 (VDCVKGIVSFFVVSLGGTLVGVIFAFLLSLVTRFT). Residues 275–276 (KH) are Cytoplasmic-facing. A helical membrane pass occupies residues 277–299 (VRIIEPGFVFVISYLSYLTSEML). Residues 300–301 (SL) lie on the Extracellular side of the membrane. Residues 302–318 (SSILAITFCGICCQKYV) traverse the membrane as a helical segment. Over 319 to 325 (KANISEQ) the chain is Cytoplasmic. Residues 326 to 354 (SATTVRYTMKMLASGAETIIFMFLGISAV) form a helical membrane-spanning segment. Topologically, residues 355 to 362 (NPDIWTWN) are extracellular. The helical transmembrane segment at 363-384 (TAFVLLTLVFISVYRAIGVVLQ) threads the bilayer. At 385–397 (TWILNRYRMVQLE) the chain is on the cytoplasmic side. Met-393 serves as a coordination point for a 1,2-diacyl-sn-glycero-3-phospho-(1D-myo-inositol). Residues 398 to 421 (TIDQVVMSYGGLRGAVAYALVVLL) form a helical membrane-spanning segment. Residues 422–428 (DEKKVKE) lie on the Extracellular side of the membrane. Residues 429-462 (KNLFVSTTLIVVFFTVIFQGLTIKPLVQWLKVKR) traverse the membrane as a helical segment. The Cytoplasmic portion of the chain corresponds to 463-829 (SEHREPKLNE…QPAAPESTHM (367 aa)). The a 1,2-diacyl-sn-glycero-3-phospho-(1D-myo-inositol) site is built by Gln-492, Ile-493, and His-495. Residues Ser-550 and Ser-558 each carry the phosphoserine modification. The interaction with EZR stretch occupies residues 571 to 585 (RPSTVEASVSYFLRE). Residues 586-663 (NVSAVCLDMQ…RKRLESFKSA (78 aa)) are interaction with NHERF4. The interaction with AHCYL1 stretch occupies residues 587–691 (VSAVCLDMQS…AQKRRNSSIP (105 aa)). 2 positions are modified to phosphoserine: Ser-588 and Ser-603. Ser-659 carries the phosphoserine; by SGK1 modification. Over residues 677-687 (YKRERAQKRRN) the composition is skewed to basic residues. Positions 677–696 (YKRERAQKRRNSSIPNGKLP) are disordered. Residues Ser-714, Ser-805, and Ser-808 each carry the phosphoserine modification.

The protein belongs to the monovalent cation:proton antiporter 1 (CPA1) transporter (TC 2.A.36) family. Homodimer. Found in the forms of complex and dynamic macromolecular complexes. Binds NHERF1 and NHERF2. Interacts with CHP1; this interaction increases trafficking and activity of SLC9A3 at the plasma membrane. Interacts with CHP2 and SHANK2. Interacts with PDZK1 (via C-terminal PDZ domain). Interacts with NHERF4 and interactions decrease in response to elevated calcium ion levels. Interacts with AHCYL1; the interaction is required for SLC9A3 activity. Interacts with EZR; interaction targets SLC9A3 to the apical membrane. Interacts with SNX27 (via PDZ domains); directs SLC9A3 membrane insertion from early endosomes to the plasma membrane. Phosphorylated by PKA, which inhibits activity. Phosphorylation at Ser-659 by SGK1 is associated with increased abundance at the cell membrane. Phosphorylation at Ser-714 by CSNK2A1 regulates SLC9A3 activity through the formation of multiple signaling complexes.

It is found in the apical cell membrane. It localises to the cell membrane. Its subcellular location is the recycling endosome membrane. The protein resides in the early endosome membrane. The enzyme catalyses Na(+)(in) + H(+)(out) = Na(+)(out) + H(+)(in). With respect to regulation, seems to switch between active and inactive modes in response to various stimuli. Activated directly or indirectly by membrane phosphatidylinositol (PIs). Regulated by a variety of auxiliary proteins, which facilitate the maturation, cell surface expression and function of the transporter. Inhibited specifically by the drug tenapanor. In terms of biological role, plasma membrane Na(+)/H(+) antiporter. Exchanges intracellular H(+) ions for extracellular Na(+) in 1:1 stoichiometry, playing a key role in salt and fluid absorption and pH homeostasis. Major apical Na(+)/H(+) exchanger in kidney and intestine playing an important role in renal and intestine Na(+) absorption and blood pressure regulation. This is Sodium/hydrogen exchanger 3 from Mus musculus (Mouse).